The primary structure comprises 376 residues: Erythronate-4-phosphate dehydrogenase (376 aa).

Substrate-binding residues include Ser-45 and Thr-67. Asp-147 contacts NAD(+). Residue Arg-209 is part of the active site. Asp-233 serves as a coordination point for NAD(+). Glu-238 is a catalytic residue. Residue His-255 is the Proton donor of the active site. Gly-258 serves as a coordination point for NAD(+). Position 259 (Tyr-259) interacts with substrate.

This sequence belongs to the D-isomer specific 2-hydroxyacid dehydrogenase family. PdxB subfamily. In terms of assembly, homodimer.

The protein resides in the cytoplasm. The enzyme catalyses 4-phospho-D-erythronate + NAD(+) = (R)-3-hydroxy-2-oxo-4-phosphooxybutanoate + NADH + H(+). It participates in cofactor biosynthesis; pyridoxine 5'-phosphate biosynthesis; pyridoxine 5'-phosphate from D-erythrose 4-phosphate: step 2/5. Its function is as follows. Catalyzes the oxidation of erythronate-4-phosphate to 3-hydroxy-2-oxo-4-phosphonooxybutanoate. The protein is Erythronate-4-phosphate dehydrogenase of Shewanella baltica (strain OS195).